Consider the following 615-residue polypeptide: Medium-chain acyl-CoA ligase ACSF2, mitochondrial (615 aa).

The N-terminal 41 residues, 1–41 (MAVYVGMLRLGRLCAGSSGVLGARVALSRSWQEARLQGVRF), are a transit peptide targeting the mitochondrion. Lys179 carries the N6-acetyllysine modification. Position 182 is an N6-acetyllysine; alternate (Lys182). The residue at position 182 (Lys182) is an N6-succinyllysine; alternate. 263–271 (TSGTTGSPK) is a binding site for ATP. 2 positions are modified to N6-acetyllysine: Lys340 and Lys398. The residue at position 478 (Lys478) is an N6-succinyllysine. 2 residues coordinate ATP: Asp493 and Arg508. Residue Lys510 is modified to N6-acetyllysine. An N6-acetyllysine; alternate mark is found at Lys544 and Lys570. N6-succinyllysine; alternate is present on residues Lys544 and Lys570. Residue Lys599 coordinates ATP. At Lys599 the chain carries N6-succinyllysine.

The protein belongs to the ATP-dependent AMP-binding enzyme family.

The protein localises to the mitochondrion. The enzyme catalyses a medium-chain fatty acid + ATP + CoA = a medium-chain fatty acyl-CoA + AMP + diphosphate. It catalyses the reaction octanoate + ATP + CoA = octanoyl-CoA + AMP + diphosphate. Functionally, acyl-CoA synthases catalyze the initial reaction in fatty acid metabolism, by forming a thioester with CoA. Has some preference toward medium-chain substrates. Plays a role in adipocyte differentiation. The chain is Medium-chain acyl-CoA ligase ACSF2, mitochondrial from Pongo abelii (Sumatran orangutan).